Reading from the N-terminus, the 289-residue chain is Diaminopimelate epimerase (289 aa).

Positions 13, 47, and 67 each coordinate substrate. Residue Cys76 is the Proton donor of the active site. Residues 77-78 (GN), Asn167, Asn200, and 218-219 (ER) contribute to the substrate site. Cys227 acts as the Proton acceptor in catalysis. Position 228-229 (228-229 (GT)) interacts with substrate.

This sequence belongs to the diaminopimelate epimerase family. Homodimer.

It is found in the cytoplasm. The enzyme catalyses (2S,6S)-2,6-diaminopimelate = meso-2,6-diaminopimelate. It functions in the pathway amino-acid biosynthesis; L-lysine biosynthesis via DAP pathway; DL-2,6-diaminopimelate from LL-2,6-diaminopimelate: step 1/1. Its function is as follows. Catalyzes the stereoinversion of LL-2,6-diaminopimelate (L,L-DAP) to meso-diaminopimelate (meso-DAP), a precursor of L-lysine and an essential component of the bacterial peptidoglycan. The protein is Diaminopimelate epimerase of Burkholderia vietnamiensis (strain G4 / LMG 22486) (Burkholderia cepacia (strain R1808)).